Here is a 153-residue protein sequence, read N- to C-terminus: D-aminoacyl-tRNA deacylase (153 aa).

A Gly-cisPro motif, important for rejection of L-amino acids motif is present at residues 142–143; sequence GP.

It belongs to the DTD family. In terms of assembly, homodimer.

The protein localises to the cytoplasm. It carries out the reaction glycyl-tRNA(Ala) + H2O = tRNA(Ala) + glycine + H(+). The enzyme catalyses a D-aminoacyl-tRNA + H2O = a tRNA + a D-alpha-amino acid + H(+). An aminoacyl-tRNA editing enzyme that deacylates mischarged D-aminoacyl-tRNAs. Also deacylates mischarged glycyl-tRNA(Ala), protecting cells against glycine mischarging by AlaRS. Acts via tRNA-based rather than protein-based catalysis; rejects L-amino acids rather than detecting D-amino acids in the active site. By recycling D-aminoacyl-tRNA to D-amino acids and free tRNA molecules, this enzyme counteracts the toxicity associated with the formation of D-aminoacyl-tRNA entities in vivo and helps enforce protein L-homochirality. The sequence is that of D-aminoacyl-tRNA deacylase from Cupriavidus taiwanensis (strain DSM 17343 / BCRC 17206 / CCUG 44338 / CIP 107171 / LMG 19424 / R1) (Ralstonia taiwanensis (strain LMG 19424)).